The primary structure comprises 395 residues: Glutamate N-acetyltransferase (395 aa).

Substrate contacts are provided by T146, K169, T180, E263, N390, and T395. Catalysis depends on T180, which acts as the Nucleophile.

Belongs to the ArgJ family. Heterotetramer of two alpha and two beta chains.

The protein resides in the cytoplasm. The enzyme catalyses N(2)-acetyl-L-ornithine + L-glutamate = N-acetyl-L-glutamate + L-ornithine. Its pathway is amino-acid biosynthesis; L-arginine biosynthesis; L-ornithine and N-acetyl-L-glutamate from L-glutamate and N(2)-acetyl-L-ornithine (cyclic): step 1/1. Functionally, catalyzes the transfer of the acetyl group from N(2)-acetylornithine to glutamate, forming N-acetylglutamate and L-ornithine. In Methanosarcina mazei (strain ATCC BAA-159 / DSM 3647 / Goe1 / Go1 / JCM 11833 / OCM 88) (Methanosarcina frisia), this protein is Glutamate N-acetyltransferase.